The chain runs to 148 residues: MVGSPRAPLLLLASLIVALALALAVSPAAAQGPRKGRLLGGLMEADVNEEGVQEALSFAVSEFNKRSNDAYQSRVVRVVRARKQVVSGMNYFLDVELGRTTCTKSQANLDSCPFHNQPHLKREKLCSFQVYVVPWMNTINLVKFSCQD.

An N-terminal signal peptide occupies residues 1–30; that stretch reads MVGSPRAPLLLLASLIVALALALAVSPAAA. Pyrrolidone carboxylic acid is present on Q31. A Secondary area of contact motif is present at residues 84 to 88; it reads QVVSG. Disulfide bonds link C102-C112 and C126-C146.

It is found in the secreted. Its function is as follows. This is a thiol proteinase inhibitor. This is Cystatin-C (CST3) from Bos taurus (Bovine).